Reading from the N-terminus, the 112-residue chain is Large ribosomal subunit protein eL30 (112 aa).

Belongs to the eukaryotic ribosomal protein eL30 family.

This is Large ribosomal subunit protein eL30 (RPL30) from Lupinus luteus (European yellow lupine).